Here is a 120-residue protein sequence, read N- to C-terminus: uncharacterized protein (120 aa).

The 118-residue stretch at Ile3 to Glu120 folds into the N-acetyltransferase domain.

This is an uncharacterized protein from Bacillus methanolicus.